Consider the following 88-residue polypeptide: Putative membrane protein insertion efficiency factor (88 aa).

The protein belongs to the UPF0161 family.

The protein resides in the cell inner membrane. Functionally, could be involved in insertion of integral membrane proteins into the membrane. This is Putative membrane protein insertion efficiency factor from Coxiella burnetii (strain Dugway 5J108-111).